The sequence spans 375 residues: Heat shock protein 42 (375 aa).

Disordered regions lie at residues 21 to 59 (TGQR…HPLY), 81 to 127 (SPEY…YYHC), 154 to 238 (PYEG…ETRM), and 347 to 375 (PKPK…TVEN). The segment covering 22–48 (GQRGQQGYPRQPQRPQRYHPHYGQVHV) has biased composition (low complexity). Over residues 49–58 (GGHHPRHHPL) the composition is skewed to basic residues. Composition is skewed to acidic residues over residues 85 to 101 (GYDD…EDMV) and 158 to 168 (TEPEIEANTEQ). Residues 169 to 197 (EGEKGEEKDKKDKSEAPKEEAGETNKEKP) are compositionally biased toward basic and acidic residues. A phosphoserine mark is found at serine 182, serine 213, serine 214, serine 215, and serine 223. One can recognise a sHSP domain in the interval 237 to 356 (RMDLPFSPEV…PKPKKRIAIE (120 aa)). A compositionally biased stretch (acidic residues) spans 357 to 367 (EIPDEELEFEE).

It belongs to the small heat shock protein (HSP20) family. In terms of assembly, forms oligomeric complexes. Interacts with itself.

This chain is Heat shock protein 42 (HSP42), found in Saccharomyces cerevisiae (strain ATCC 204508 / S288c) (Baker's yeast).